The primary structure comprises 576 residues: Nuclear/nucleolar GTPase 2 (576 aa).

2 disordered regions span residues 1–61 (MVKK…SNEY) and 166–186 (QDAF…EEED). A compositionally biased stretch (basic and acidic residues) spans 16 to 34 (HSLDANRADGKKKTTETRS). Over residues 42–52 (KMYKTRPKRNA) the composition is skewed to basic residues. Positions 206–367 (WGELYKVIDS…LIDCPGVVYQ (162 aa)) constitute a CP-type G domain. Positions 224–228 (DARDP) match the DARXP motif motif. Residues 254–257 (NKCD) form a G4 region. 254-257 (NKCD) serves as a coordination point for GTP. Positions 283 to 285 (SVN) are G5. Residues 316–323 (GYPNVGKS) form a G1 region. Residue 319–324 (NVGKSS) coordinates GTP. The G2 stretch occupies residues 342–346 (GETKV). The segment at 360–363 (DCPG) is G3. Gly363 contributes to the GTP binding site. The interval 502–576 (TQQQKDVPVQ…DEEDESDSAE (75 aa)) is disordered. Positions 509–530 (PVQRDFYDEKDLKDDKKAKEST) are enriched in basic and acidic residues. The segment covering 531-576 (ETDAENGTDAEEDEDAVSEDGVESDSDADEDAVSENDEEDESDSAE) has biased composition (acidic residues).

This sequence belongs to the TRAFAC class YlqF/YawG GTPase family. RsgA subfamily. Interacts with the 60S ribosomal proteins RPL10AA, RPL10AB and RPL10AC. As to expression, ubiquitous, with higher levels in meristematic regions.

It is found in the nucleus. The protein resides in the nucleolus. Its activity is regulated as follows. The GTPase activity is stimulated in the presence of the 60S ribosomal subunit. GTPase involved in pre-60S ribosomal subunit maturation. This chain is Nuclear/nucleolar GTPase 2, found in Arabidopsis thaliana (Mouse-ear cress).